We begin with the raw amino-acid sequence, 1061 residues long: Lysine-specific demethylase jmjd-3.1 (1061 aa).

Disordered regions lie at residues 30–49 (VKNS…MRPV) and 256–417 (KSLS…KRRT). Positions 271-287 (QHTNSVGSSIGTTSGDS) are enriched in polar residues. Over residues 310-320 (STSSEFTETTS) the composition is skewed to low complexity. Polar residues predominate over residues 321-330 (VANQTESNAG). The required for nuclear localization stretch occupies residues 369–417 (KKKEQSATEPPIPRTKRAYTKNPNTIRKRRMKKNQSDDEEDDGPPKRRT). A required for binding of unc-3 and for function in Y-to-PDA transdifferentiation region spans residues 418–759 (INYQIEFRDA…FGTNIDLLSE (342 aa)). A JmjC domain is found at 760–923 (NFKKQMNEIE…LATSIVAHDH (164 aa)). Fe cation is bound by residues histidine 811, glutamate 813, and histidine 891. Zn(2+) contacts are provided by cysteine 998, cysteine 1001, cysteine 1025, and cysteine 1028.

It belongs to the UTX family. As to quaternary structure, interacts with wdr-5.1 and unc-3. It depends on Fe(2+) as a cofactor. As to expression, mainly expressed in head and tail.

Its subcellular location is the nucleus. Histone demethylase that specifically demethylates trimethylated 'Lys-27' of histone H3, a mark associated with transcriptional repression, thereby playing a central role in the histone code. Involved in the transcriptional regulation of the heat shock response, unfolded protein response and possibly other stress response target genes. Required for gonad development and organization. Required for the robust transdifferentiation of the Y rectal epithelial cell to the PDA motor neuron during larval development. Acts cell-autonomously in Y-to-PDA transdifferentiation, which depends on the demethylase activity and on recognition of the H3 tail. Cooperates with set-2 and unc-3 to ensure robust Y-to-PDA transdifferentiation. Promotes mitochondrial stress-induced longevity. Involved in lifespan regulation. In Caenorhabditis elegans, this protein is Lysine-specific demethylase jmjd-3.1.